Consider the following 326-residue polypeptide: Peroxidase 43 (326 aa).

The N-terminal stretch at 1 to 24 (MVWANAKMRLALSLVTVFFGISLA) is a signal peptide. Disulfide bonds link C35–C112, C68–C73, C118–C322, and C196–C228. The active-site Proton acceptor is H66. Positions 67, 70, 72, 74, and 76 each coordinate Ca(2+). An N-linked (GlcNAc...) asparagine glycan is attached at N151. A substrate-binding site is contributed by P159. Position 189 (H189) interacts with heme b. T190 is a binding site for Ca(2+). 3 residues coordinate Ca(2+): D241, S244, and D249.

The protein belongs to the peroxidase family. Classical plant (class III) peroxidase subfamily. Heme b is required as a cofactor. The cofactor is Ca(2+).

The protein resides in the secreted. The catalysed reaction is 2 a phenolic donor + H2O2 = 2 a phenolic radical donor + 2 H2O. In terms of biological role, removal of H(2)O(2), oxidation of toxic reductants, biosynthesis and degradation of lignin, suberization, auxin catabolism, response to environmental stresses such as wounding, pathogen attack and oxidative stress. These functions might be dependent on each isozyme/isoform in each plant tissue. This chain is Peroxidase 43 (PER43), found in Arabidopsis thaliana (Mouse-ear cress).